The following is a 519-amino-acid chain: bZIP transcription factor 30 (519 aa).

Disordered stretches follow at residues 1–30 (MGGGGDTTDTNMMQRVNSSSGTSSSSIPKH), 45–83 (FRHPFTGAPPPPIPPISPYSQIPATLQPRHSRSMSQPSS), 108–202 (TGAG…RKPE), 222–295 (VLNS…TGRH), and 315–339 (SSLKLPPSSSAKVSPTNSGEGNSSA). Residues 51–61 (GAPPPPIPPIS) show a composition bias toward pro residues. Positions 149–173 (SDVTFGFSSMMSQNQKSPPLSSLER) are enriched in polar residues. Over residues 187-202 (VKKEPREGFYKGRKPE) the composition is skewed to basic and acidic residues. Composition is skewed to low complexity over residues 244-268 (SRGSGTKKTNGGSSSDSEGDSSASG) and 317-329 (LKLPPSSSAKVSP). The segment covering 330 to 339 (TNSGEGNSSA) has biased composition (polar residues). Residues 372-393 (KRVKRILANRVSAARSKERKTR) form a basic motif region. Residues 386–460 (RSKERKTRYM…SEKLNEEVQR (75 aa)) are a coiled coil. Residues 398–433 (LEHKVQTLQTEATTLSAQLTHLQRDSMGLTNQNSEL) form a leucine-zipper region. The disordered stretch occupies residues 465 to 519 (IGEPNRRQSGSSSSESKMSLNPEMFQQLSISQLQHQQMQHSNQCSTMKAKHTSND). Low complexity-rich tracts occupy residues 473 to 483 (SGSSSSESKMS) and 490 to 509 (QQLSISQLQHQQMQHSNQCS).

Interacts with WUS, HEC1, KNAT1, KNAT2, HAT1, BEL1, and NGA1. Expressed in inflorescence meristem, floral organ primordia, gynoecia, ovules and carpel margin meristem.

Its subcellular location is the nucleus. Transcription factor that acts as a repressor of reproductive development, meristem size and plant growth. Acts as a transcriptional repressor in inflorescence tissues. Interacts with well known regulators of meristem and gynoecium development such as WUS, HEC1, KNAT1, KNAT2, HAT1, BEL1 and NGA1. Acts as a positive regulator of JAG and OFP1 expression in developing gynoecia. This is bZIP transcription factor 30 from Arabidopsis thaliana (Mouse-ear cress).